The sequence spans 359 residues: tRNA-specific 2-thiouridylase MnmA (359 aa).

Residues 9–16 (GISGGVDS) and Met-35 each bind ATP. The interaction with target base in tRNA stretch occupies residues 95-97 (NPD). Cys-100 acts as the Nucleophile in catalysis. A disulfide bond links Cys-100 and Cys-197. Residue Gly-124 coordinates ATP. The interval 147-149 (KDQ) is interaction with tRNA. The Cysteine persulfide intermediate role is filled by Cys-197. The interval 309-310 (RY) is interaction with tRNA.

It belongs to the MnmA/TRMU family.

It localises to the cytoplasm. It catalyses the reaction S-sulfanyl-L-cysteinyl-[protein] + uridine(34) in tRNA + AH2 + ATP = 2-thiouridine(34) in tRNA + L-cysteinyl-[protein] + A + AMP + diphosphate + H(+). Functionally, catalyzes the 2-thiolation of uridine at the wobble position (U34) of tRNA, leading to the formation of s(2)U34. The chain is tRNA-specific 2-thiouridylase MnmA from Francisella tularensis subsp. tularensis (strain FSC 198).